An 86-amino-acid polypeptide reads, in one-letter code: Cell division topological specificity factor (86 aa).

It belongs to the MinE family.

In terms of biological role, prevents the cell division inhibition by proteins MinC and MinD at internal division sites while permitting inhibition at polar sites. This ensures cell division at the proper site by restricting the formation of a division septum at the midpoint of the long axis of the cell. The protein is Cell division topological specificity factor of Shewanella frigidimarina (strain NCIMB 400).